The chain runs to 308 residues: tRNA dimethylallyltransferase (308 aa).

An ATP-binding site is contributed by 17–24 (GPTGSGKS). 19–24 (TGSGKS) is a substrate binding site.

This sequence belongs to the IPP transferase family. In terms of assembly, monomer. Mg(2+) is required as a cofactor.

It catalyses the reaction adenosine(37) in tRNA + dimethylallyl diphosphate = N(6)-dimethylallyladenosine(37) in tRNA + diphosphate. Functionally, catalyzes the transfer of a dimethylallyl group onto the adenine at position 37 in tRNAs that read codons beginning with uridine, leading to the formation of N6-(dimethylallyl)adenosine (i(6)A). This Paenarthrobacter aurescens (strain TC1) protein is tRNA dimethylallyltransferase.